Consider the following 550-residue polypeptide: tRNA modification GTPase MnmE (550 aa).

Residues R20, E78, and R116 each coordinate (6S)-5-formyl-5,6,7,8-tetrahydrofolate. Positions 212–478 constitute a TrmE-type G domain; sequence GFSVVIVGKP…LLDKIFDIIS (267 aa). N222 contributes to the K(+) binding site. GTP-binding positions include 222–227, 241–247, and 266–269; these read NVGKST, TDIPGTT, and DTAG. S226 lines the Mg(2+) pocket. T241, I243, and T246 together coordinate K(+). Residue T247 coordinates Mg(2+). Residue K550 participates in (6S)-5-formyl-5,6,7,8-tetrahydrofolate binding.

Belongs to the TRAFAC class TrmE-Era-EngA-EngB-Septin-like GTPase superfamily. TrmE GTPase family. Homodimer. Heterotetramer of two MnmE and two MnmG subunits. It depends on K(+) as a cofactor.

The protein resides in the cytoplasm. Its function is as follows. Exhibits a very high intrinsic GTPase hydrolysis rate. Involved in the addition of a carboxymethylaminomethyl (cmnm) group at the wobble position (U34) of certain tRNAs, forming tRNA-cmnm(5)s(2)U34. The chain is tRNA modification GTPase MnmE from Neorickettsia sennetsu (strain ATCC VR-367 / Miyayama) (Ehrlichia sennetsu).